Here is a 359-residue protein sequence, read N- to C-terminus: 5-amino-6-(D-ribitylamino)uracil--L-tyrosine 4-hydroxyphenyl transferase (359 aa).

In terms of domain architecture, Radical SAM core spans 45 to 282 (VTYVVNANIN…TYAVSRIFFK (238 aa)). Cysteine 59, cysteine 63, and cysteine 66 together coordinate [4Fe-4S] cluster.

It belongs to the radical SAM superfamily. CofH family. Consists of two subunits, CofG and CofH. The cofactor is [4Fe-4S] cluster.

The enzyme catalyses 5-amino-6-(D-ribitylamino)uracil + L-tyrosine + S-adenosyl-L-methionine = 5-amino-5-(4-hydroxybenzyl)-6-(D-ribitylimino)-5,6-dihydrouracil + 2-iminoacetate + 5'-deoxyadenosine + L-methionine + H(+). It functions in the pathway cofactor biosynthesis; coenzyme F0 biosynthesis. Functionally, catalyzes the radical-mediated synthesis of 5-amino-5-(4-hydroxybenzyl)-6-(D-ribitylimino)-5,6-dihydrouracil from 5-amino-6-(D-ribitylamino)uracil and L-tyrosine. This chain is 5-amino-6-(D-ribitylamino)uracil--L-tyrosine 4-hydroxyphenyl transferase, found in Methanococcus maripaludis (strain C6 / ATCC BAA-1332).